We begin with the raw amino-acid sequence, 480 residues long: Aspartyl/glutamyl-tRNA(Asn/Gln) amidotransferase subunit B (480 aa).

It belongs to the GatB/GatE family. GatB subfamily. In terms of assembly, heterotrimer of A, B and C subunits.

The catalysed reaction is L-glutamyl-tRNA(Gln) + L-glutamine + ATP + H2O = L-glutaminyl-tRNA(Gln) + L-glutamate + ADP + phosphate + H(+). The enzyme catalyses L-aspartyl-tRNA(Asn) + L-glutamine + ATP + H2O = L-asparaginyl-tRNA(Asn) + L-glutamate + ADP + phosphate + 2 H(+). Its function is as follows. Allows the formation of correctly charged Asn-tRNA(Asn) or Gln-tRNA(Gln) through the transamidation of misacylated Asp-tRNA(Asn) or Glu-tRNA(Gln) in organisms which lack either or both of asparaginyl-tRNA or glutaminyl-tRNA synthetases. The reaction takes place in the presence of glutamine and ATP through an activated phospho-Asp-tRNA(Asn) or phospho-Glu-tRNA(Gln). The polypeptide is Aspartyl/glutamyl-tRNA(Asn/Gln) amidotransferase subunit B (Caldicellulosiruptor bescii (strain ATCC BAA-1888 / DSM 6725 / KCTC 15123 / Z-1320) (Anaerocellum thermophilum)).